The sequence spans 361 residues: Chorismate synthase (361 aa).

Residues R48 and R54 each coordinate NADP(+). FMN contacts are provided by residues 125–127 (RSS), 238–239 (NA), G278, 293–297 (KPTSS), and R319.

It belongs to the chorismate synthase family. In terms of assembly, homotetramer. FMNH2 is required as a cofactor.

It catalyses the reaction 5-O-(1-carboxyvinyl)-3-phosphoshikimate = chorismate + phosphate. It participates in metabolic intermediate biosynthesis; chorismate biosynthesis; chorismate from D-erythrose 4-phosphate and phosphoenolpyruvate: step 7/7. Functionally, catalyzes the anti-1,4-elimination of the C-3 phosphate and the C-6 proR hydrogen from 5-enolpyruvylshikimate-3-phosphate (EPSP) to yield chorismate, which is the branch point compound that serves as the starting substrate for the three terminal pathways of aromatic amino acid biosynthesis. This reaction introduces a second double bond into the aromatic ring system. This chain is Chorismate synthase, found in Enterobacter sp. (strain 638).